The primary structure comprises 365 residues: Histidinol-phosphate aminotransferase (365 aa).

Positions 1–22 are disordered; sequence MSRPVPNPGILDIAPYTPGKSP. Lys-221 is subject to N6-(pyridoxal phosphate)lysine.

It belongs to the class-II pyridoxal-phosphate-dependent aminotransferase family. Histidinol-phosphate aminotransferase subfamily. In terms of assembly, homodimer. Pyridoxal 5'-phosphate serves as cofactor.

The enzyme catalyses L-histidinol phosphate + 2-oxoglutarate = 3-(imidazol-4-yl)-2-oxopropyl phosphate + L-glutamate. Its pathway is amino-acid biosynthesis; L-histidine biosynthesis; L-histidine from 5-phospho-alpha-D-ribose 1-diphosphate: step 7/9. The sequence is that of Histidinol-phosphate aminotransferase from Nitrobacter winogradskyi (strain ATCC 25391 / DSM 10237 / CIP 104748 / NCIMB 11846 / Nb-255).